We begin with the raw amino-acid sequence, 494 residues long: V-type proton ATPase subunit B (494 aa).

Position 384 (Arg384) interacts with ATP.

This sequence belongs to the ATPase alpha/beta chains family. As to quaternary structure, V-ATPase is a heteromultimeric enzyme made up of two complexes: the ATP-hydrolytic V1 complex and the proton translocation V0 complex. The V1 complex consists of three catalytic AB heterodimers that form a heterohexamer, three peripheral stalks each consisting of EG heterodimers, one central rotor including subunits D and F, and the regulatory subunits C and H. The proton translocation complex V0 consists of the proton transport subunit a, a ring of proteolipid subunits c9c'', rotary subunit d, subunits e and f, and the accessory subunits VhaAC45 and ATP6AP2.

Non-catalytic subunit of the V1 complex of vacuolar(H+)-ATPase (V-ATPase), a multisubunit enzyme composed of a peripheral complex (V1) that hydrolyzes ATP and a membrane integral complex (V0) that translocates protons. V-ATPase is responsible for acidifying and maintaining the pH of intracellular compartments and in some cell types, is targeted to the plasma membrane, where it is responsible for acidifying the extracellular environment. Essential for the proper assembly and activity of V-ATPase. This chain is V-type proton ATPase subunit B (VHA55), found in Manduca sexta (Tobacco hawkmoth).